The sequence spans 175 residues: Crossover junction endodeoxyribonuclease RuvC (175 aa).

Active-site residues include Asp12, Glu72, and Asp144. The Mg(2+) site is built by Asp12, Glu72, and Asp144.

The protein belongs to the RuvC family. As to quaternary structure, homodimer which binds Holliday junction (HJ) DNA. The HJ becomes 2-fold symmetrical on binding to RuvC with unstacked arms; it has a different conformation from HJ DNA in complex with RuvA. In the full resolvosome a probable DNA-RuvA(4)-RuvB(12)-RuvC(2) complex forms which resolves the HJ. Requires Mg(2+) as cofactor.

It is found in the cytoplasm. The enzyme catalyses Endonucleolytic cleavage at a junction such as a reciprocal single-stranded crossover between two homologous DNA duplexes (Holliday junction).. The RuvA-RuvB-RuvC complex processes Holliday junction (HJ) DNA during genetic recombination and DNA repair. Endonuclease that resolves HJ intermediates. Cleaves cruciform DNA by making single-stranded nicks across the HJ at symmetrical positions within the homologous arms, yielding a 5'-phosphate and a 3'-hydroxyl group; requires a central core of homology in the junction. The consensus cleavage sequence is 5'-(A/T)TT(C/G)-3'. Cleavage occurs on the 3'-side of the TT dinucleotide at the point of strand exchange. HJ branch migration catalyzed by RuvA-RuvB allows RuvC to scan DNA until it finds its consensus sequence, where it cleaves and resolves the cruciform DNA. The sequence is that of Crossover junction endodeoxyribonuclease RuvC from Beijerinckia indica subsp. indica (strain ATCC 9039 / DSM 1715 / NCIMB 8712).